The following is a 214-amino-acid chain: Avenin (214 aa).

The signal sequence occupies residues 1–28; it reads MKIFFFLALLALVVSATFAQYAESDGSY. A disordered region spans residues 180 to 214; that stretch reads RGQESGVFTPKFTQTSFQPYPEGEDESSLINKASE.

In terms of biological role, seed storage protein. This is Avenin from Avena sativa (Oat).